The primary structure comprises 449 residues: tRNA-2-methylthio-N(6)-dimethylallyladenosine synthase (449 aa).

The MTTase N-terminal domain maps to 3-124 (KMLYIKTYGC…LPTMLEKLDS (122 aa)). Cys-12, Cys-48, Cys-87, Cys-163, Cys-167, and Cys-170 together coordinate [4Fe-4S] cluster. The Radical SAM core domain occupies 149 to 380 (KSPTVSGLVS…QAQLMQQQLE (232 aa)). The region spanning 383-447 (QKLIGKVVPV…ASSLFGEVYA (65 aa)) is the TRAM domain.

It belongs to the methylthiotransferase family. MiaB subfamily. In terms of assembly, monomer. [4Fe-4S] cluster serves as cofactor.

Its subcellular location is the cytoplasm. It carries out the reaction N(6)-dimethylallyladenosine(37) in tRNA + (sulfur carrier)-SH + AH2 + 2 S-adenosyl-L-methionine = 2-methylsulfanyl-N(6)-dimethylallyladenosine(37) in tRNA + (sulfur carrier)-H + 5'-deoxyadenosine + L-methionine + A + S-adenosyl-L-homocysteine + 2 H(+). Catalyzes the methylthiolation of N6-(dimethylallyl)adenosine (i(6)A), leading to the formation of 2-methylthio-N6-(dimethylallyl)adenosine (ms(2)i(6)A) at position 37 in tRNAs that read codons beginning with uridine. The sequence is that of tRNA-2-methylthio-N(6)-dimethylallyladenosine synthase from Orientia tsutsugamushi (strain Ikeda) (Rickettsia tsutsugamushi).